Consider the following 88-residue polypeptide: Small ribosomal subunit protein uS15c (88 aa).

Belongs to the universal ribosomal protein uS15 family. Part of the 30S ribosomal subunit.

It localises to the plastid. The protein resides in the chloroplast. The chain is Small ribosomal subunit protein uS15c (rps15) from Lobularia maritima (Sweet alyssum).